Reading from the N-terminus, the 341-residue chain is HTH-type transcriptional repressor PurR (341 aa).

An HTH lacI-type domain is found at 2–56; it reads ATIKDVAKRANVSTTTVSHVINKTRFVAEETRNAVWAAIKELHYSPSAVARSLKV. The H-T-H motif DNA-binding region spans 4–23; that stretch reads IKDVAKRANVSTTTVSHVIN. A DNA-binding region spans residues 48–56; it reads SAVARSLKV. Hypoxanthine-binding residues include Tyr73, Arg190, Thr192, Phe221, and Asp275.

Homodimer.

The protein operates within purine metabolism; purine nucleotide biosynthesis [regulation]. In terms of biological role, is the main repressor of the genes involved in the de novo synthesis of purine nucleotides, regulating purB, purC, purEK, purF, purHD, purL, purMN and guaBA expression. PurR is allosterically activated to bind its cognate DNA by binding the purine corepressors, hypoxanthine or guanine, thereby effecting transcription repression. In Klebsiella pneumoniae (strain 342), this protein is HTH-type transcriptional repressor PurR.